Here is a 93-residue protein sequence, read N- to C-terminus: Small ribosomal subunit protein uS19 (93 aa).

The protein belongs to the universal ribosomal protein uS19 family.

Protein S19 forms a complex with S13 that binds strongly to the 16S ribosomal RNA. The protein is Small ribosomal subunit protein uS19 of Citrifermentans bemidjiense (strain ATCC BAA-1014 / DSM 16622 / JCM 12645 / Bem) (Geobacter bemidjiensis).